A 643-amino-acid polypeptide reads, in one-letter code: Fructose-1,6-bisphosphatase class 3 (643 aa).

It belongs to the FBPase class 3 family. The cofactor is Mn(2+).

It carries out the reaction beta-D-fructose 1,6-bisphosphate + H2O = beta-D-fructose 6-phosphate + phosphate. The protein operates within carbohydrate biosynthesis; gluconeogenesis. This chain is Fructose-1,6-bisphosphatase class 3, found in Lacticaseibacillus paracasei (strain ATCC 334 / BCRC 17002 / CCUG 31169 / CIP 107868 / KCTC 3260 / NRRL B-441) (Lactobacillus paracasei).